We begin with the raw amino-acid sequence, 241 residues long: Pyridoxine 5'-phosphate synthase (241 aa).

Residue Asn7 coordinates 3-amino-2-oxopropyl phosphate. 9 to 10 provides a ligand contact to 1-deoxy-D-xylulose 5-phosphate; it reads DH. Position 18 (Arg18) interacts with 3-amino-2-oxopropyl phosphate. Catalysis depends on His43, which acts as the Proton acceptor. Residues Arg45 and His50 each coordinate 1-deoxy-D-xylulose 5-phosphate. Glu70 (proton acceptor) is an active-site residue. 1-deoxy-D-xylulose 5-phosphate is bound at residue Thr100. Residue His191 is the Proton donor of the active site. 3-amino-2-oxopropyl phosphate contacts are provided by residues Ser192 and 213–214; that span reads GH.

It belongs to the PNP synthase family. As to quaternary structure, homooctamer; tetramer of dimers.

It localises to the cytoplasm. It catalyses the reaction 3-amino-2-oxopropyl phosphate + 1-deoxy-D-xylulose 5-phosphate = pyridoxine 5'-phosphate + phosphate + 2 H2O + H(+). It functions in the pathway cofactor biosynthesis; pyridoxine 5'-phosphate biosynthesis; pyridoxine 5'-phosphate from D-erythrose 4-phosphate: step 5/5. In terms of biological role, catalyzes the complicated ring closure reaction between the two acyclic compounds 1-deoxy-D-xylulose-5-phosphate (DXP) and 3-amino-2-oxopropyl phosphate (1-amino-acetone-3-phosphate or AAP) to form pyridoxine 5'-phosphate (PNP) and inorganic phosphate. The polypeptide is Pyridoxine 5'-phosphate synthase (Nitrosomonas eutropha (strain DSM 101675 / C91 / Nm57)).